A 248-amino-acid polypeptide reads, in one-letter code: Ribosomal RNA small subunit methyltransferase J (248 aa).

S-adenosyl-L-methionine-binding positions include 97–98 (RD), 113–114 (ER), and aspartate 167.

Belongs to the methyltransferase superfamily. RsmJ family.

Its subcellular location is the cytoplasm. It catalyses the reaction guanosine(1516) in 16S rRNA + S-adenosyl-L-methionine = N(2)-methylguanosine(1516) in 16S rRNA + S-adenosyl-L-homocysteine + H(+). Its function is as follows. Specifically methylates the guanosine in position 1516 of 16S rRNA. This is Ribosomal RNA small subunit methyltransferase J from Aeromonas hydrophila subsp. hydrophila (strain ATCC 7966 / DSM 30187 / BCRC 13018 / CCUG 14551 / JCM 1027 / KCTC 2358 / NCIMB 9240 / NCTC 8049).